A 294-amino-acid chain; its full sequence is Protein CHLOROPLAST J-LIKE DOMAIN 1, chloroplastic (294 aa).

The transit peptide at Met-1–Arg-58 directs the protein to the chloroplast. Topologically, residues Ala-59–Asn-164 are stromal. Residues Asn-74–Ile-152 form a J-like domain region. The chain crosses the membrane as a helical span at residues Asp-165–Ile-182. The Chloroplast intermembrane portion of the chain corresponds to Lys-183 to Arg-233. A helical membrane pass occupies residues Leu-234–Leu-256. The Stromal segment spans residues Asn-257–Glu-275. The helical transmembrane segment at Leu-276–Tyr-293 threads the bilayer. A topological domain (chloroplast intermembrane) is located at residue Arg-294.

Interacts (via J-like domain) with ARC6 (via J domain).

It is found in the plastid. Its subcellular location is the chloroplast inner membrane. Its function is as follows. Probably involved in the regulation of the fatty acid metabolic process in chloroplasts, especially chloroplastic galactolipids monogalactosyldiacylglycerol (MGDG) and digalactosyldiacylglycerol (DGDG). The polypeptide is Protein CHLOROPLAST J-LIKE DOMAIN 1, chloroplastic (Arabidopsis thaliana (Mouse-ear cress)).